A 173-amino-acid chain; its full sequence is Plasmolipin (173 aa).

The Cytoplasmic segment spans residues 1–34 (MADFPGKVSTQTSSQEPQRSFAISSSVDMGFIKS). Residues 31-160 (FIKSIPGILL…SSYFAYLGWR (130 aa)) form the MARVEL domain. The helical transmembrane segment at 35–55 (IPGILLIAEIVVGLLVWTLIA) threads the bilayer. Over 56 to 67 (STPHYLIPALGW) the chain is Extracellular. Residues 68–88 (VLFVSITLWLLSIALLVILLL) form a helical membrane-spanning segment. At 89–98 (SLHQRLPSVP) the chain is on the cytoplasmic side. The helical transmembrane segment at 99-119 (WPLVLLVFYSVAALLYLTAFL) threads the bilayer. Residues 120 to 138 (ANAATVPGGYYQGHLGASA) are Extracellular-facing. Residues 139-159 (FFGIVETLLYTASSYFAYLGW) traverse the membrane as a helical segment. Residues 160–173 (RGEGQNAAGSTVPV) lie on the Cytoplasmic side of the membrane.

Belongs to the MAL family. In terms of assembly, forms oligomers. As to expression, expressed in the posterior midgut.

The protein resides in the cell membrane. Its subcellular location is the myelin membrane. It is found in the apical cell membrane. The protein localises to the recycling endosome membrane. It localises to the vesicle. Its function is as follows. Main component of the myelin sheath that plays an important role in myelin membrane biogenesis and myelination. Plays an essential function in apical endocytosis. Plays an important role by activating the Notch signaling pathway, which is essential for cell differentiation and results in correct patterning of the intestinal epithelium, particularly of the posterior gut absorptive cells. The polypeptide is Plasmolipin (pllp) (Danio rerio (Zebrafish)).